The chain runs to 318 residues: Acetyl-coenzyme A carboxylase carboxyl transferase subunit alpha (318 aa).

Positions 34-295 constitute a CoA carboxyltransferase C-terminal domain; it reads SIEEEITKLR…KATIKQQLAQ (262 aa).

The protein belongs to the AccA family. As to quaternary structure, acetyl-CoA carboxylase is a heterohexamer composed of biotin carboxyl carrier protein (AccB), biotin carboxylase (AccC) and two subunits each of ACCase subunit alpha (AccA) and ACCase subunit beta (AccD).

It localises to the cytoplasm. It catalyses the reaction N(6)-carboxybiotinyl-L-lysyl-[protein] + acetyl-CoA = N(6)-biotinyl-L-lysyl-[protein] + malonyl-CoA. It participates in lipid metabolism; malonyl-CoA biosynthesis; malonyl-CoA from acetyl-CoA: step 1/1. Functionally, component of the acetyl coenzyme A carboxylase (ACC) complex. First, biotin carboxylase catalyzes the carboxylation of biotin on its carrier protein (BCCP) and then the CO(2) group is transferred by the carboxyltransferase to acetyl-CoA to form malonyl-CoA. This Pseudoalteromonas atlantica (strain T6c / ATCC BAA-1087) protein is Acetyl-coenzyme A carboxylase carboxyl transferase subunit alpha.